The chain runs to 824 residues: Leucine--tRNA ligase (824 aa).

A 'HIGH' region motif is present at residues 42-52 (PYPSGRIHMGH). Residues 581 to 585 (KMSKS) carry the 'KMSKS' region motif. Lys584 serves as a coordination point for ATP.

The protein belongs to the class-I aminoacyl-tRNA synthetase family.

Its subcellular location is the cytoplasm. The enzyme catalyses tRNA(Leu) + L-leucine + ATP = L-leucyl-tRNA(Leu) + AMP + diphosphate. The polypeptide is Leucine--tRNA ligase (Geobacter metallireducens (strain ATCC 53774 / DSM 7210 / GS-15)).